The following is a 1045-amino-acid chain: Probable sucrose-phosphate synthase (1045 aa).

Basic and acidic residues-rich tracts occupy residues Glu93–Thr115 and Glu124–Arg137. 3 disordered regions span residues Glu93–Pro141, Trp222–Asp243, and Ile662–Leu692. A compositionally biased stretch (low complexity) spans Ser664 to Arg674.

The protein belongs to the glycosyltransferase 1 family. Homodimer or homotetramer. Predominantly active in tap root.

It carries out the reaction beta-D-fructose 6-phosphate + UDP-alpha-D-glucose = sucrose 6(F)-phosphate + UDP + H(+). It participates in glycan biosynthesis; sucrose biosynthesis; sucrose from D-fructose 6-phosphate and UDP-alpha-D-glucose: step 1/2. Its activity is regulated as follows. Activity is regulated by phosphorylation and moderated by concentration of metabolites and light. Its function is as follows. Plays a role in photosynthetic sucrose synthesis by catalyzing the rate-limiting step of sucrose biosynthesis from UDP-glucose and fructose- 6-phosphate. Involved in the regulation of carbon partitioning in the leaves of plants. May regulate the synthesis of sucrose and therefore play a major role as a limiting factor in the export of photoassimilates out of the leaf. Plays a role for sucrose availability that is essential for plant growth and fiber elongation. In Beta vulgaris (Sugar beet), this protein is Probable sucrose-phosphate synthase (SPS).